The chain runs to 162 residues: 2-C-methyl-D-erythritol 2,4-cyclodiphosphate synthase (162 aa).

A divalent metal cation is bound by residues D9 and H11. 4-CDP-2-C-methyl-D-erythritol 2-phosphate is bound by residues 9-11 (DVH) and 35-36 (HS). H43 serves as a coordination point for a divalent metal cation. 4-CDP-2-C-methyl-D-erythritol 2-phosphate is bound by residues 57–59 (DIG), 62–66 (FPDTD), 133–136 (TTTE), F140, and R143.

The protein belongs to the IspF family. In terms of assembly, homotrimer. Requires a divalent metal cation as cofactor.

It carries out the reaction 4-CDP-2-C-methyl-D-erythritol 2-phosphate = 2-C-methyl-D-erythritol 2,4-cyclic diphosphate + CMP. Its pathway is isoprenoid biosynthesis; isopentenyl diphosphate biosynthesis via DXP pathway; isopentenyl diphosphate from 1-deoxy-D-xylulose 5-phosphate: step 4/6. Functionally, involved in the biosynthesis of isopentenyl diphosphate (IPP) and dimethylallyl diphosphate (DMAPP), two major building blocks of isoprenoid compounds. Catalyzes the conversion of 4-diphosphocytidyl-2-C-methyl-D-erythritol 2-phosphate (CDP-ME2P) to 2-C-methyl-D-erythritol 2,4-cyclodiphosphate (ME-CPP) with a corresponding release of cytidine 5-monophosphate (CMP). This is 2-C-methyl-D-erythritol 2,4-cyclodiphosphate synthase from Histophilus somni (strain 2336) (Haemophilus somnus).